Reading from the N-terminus, the 491-residue chain is Protein nucleotidyltransferase YdiU (491 aa).

Residues glycine 94, glycine 96, arginine 97, lysine 117, aspartate 129, glycine 130, arginine 180, and arginine 187 each coordinate ATP. The active-site Proton acceptor is the aspartate 256. Asparagine 257 and aspartate 266 together coordinate Mg(2+). Position 266 (aspartate 266) interacts with ATP.

This sequence belongs to the SELO family. Mg(2+) serves as cofactor. It depends on Mn(2+) as a cofactor.

It catalyses the reaction L-seryl-[protein] + ATP = 3-O-(5'-adenylyl)-L-seryl-[protein] + diphosphate. The catalysed reaction is L-threonyl-[protein] + ATP = 3-O-(5'-adenylyl)-L-threonyl-[protein] + diphosphate. The enzyme catalyses L-tyrosyl-[protein] + ATP = O-(5'-adenylyl)-L-tyrosyl-[protein] + diphosphate. It carries out the reaction L-histidyl-[protein] + UTP = N(tele)-(5'-uridylyl)-L-histidyl-[protein] + diphosphate. It catalyses the reaction L-seryl-[protein] + UTP = O-(5'-uridylyl)-L-seryl-[protein] + diphosphate. The catalysed reaction is L-tyrosyl-[protein] + UTP = O-(5'-uridylyl)-L-tyrosyl-[protein] + diphosphate. Its function is as follows. Nucleotidyltransferase involved in the post-translational modification of proteins. It can catalyze the addition of adenosine monophosphate (AMP) or uridine monophosphate (UMP) to a protein, resulting in modifications known as AMPylation and UMPylation. The polypeptide is Protein nucleotidyltransferase YdiU (Clostridium botulinum (strain ATCC 19397 / Type A)).